Consider the following 572-residue polypeptide: Bilirubin oxidase (572 aa).

Residues 1-19 form the signal peptide; the sequence is MFKHTLGAAALSLLFNSNA. A propeptide spanning residues 20 to 38 is cleaved from the precursor; it reads VQASPVPETSPATGHLFKR. Plastocyanin-like domains follow at residues 98–194 and 404–526; these read VGYD…YMLT and VAFA…VFVD. Positions 132, 134, 172, 174, 436, 439, 441, 494, 495, 496, 500, and 505 each coordinate Cu cation. Residues N510 and N520 are each glycosylated (N-linked (GlcNAc...) asparagine).

It belongs to the multicopper oxidase family. It depends on Cu cation as a cofactor.

The catalysed reaction is 2 (4Z,15Z)-bilirubin IXalpha + O2 = 2 biliverdin IXalpha + 2 H2O. In terms of biological role, oxidation of bilirubin and other tetrapyrroles. The protein is Bilirubin oxidase of Albifimbria verrucaria (Myrothecium leaf spot and pod blight fungus).